A 95-amino-acid polypeptide reads, in one-letter code: HIG1 domain family member 1A, mitochondrial (95 aa).

N-acetylserine is present on S2. Residues S2–P93 form the HIG1 domain. S8 carries the phosphoserine modification. 2 helical membrane-spanning segments follow: residues P28–L48 and G69–A89.

As to quaternary structure, associates with cytochrome c oxidase (COX, complex IV); proposed complex component. Also associates with respiratory chain supercomplexes.

The protein localises to the mitochondrion membrane. The protein resides in the mitochondrion inner membrane. Its function is as follows. Proposed subunit of cytochrome c oxidase (COX, complex IV), which is the terminal component of the mitochondrial respiratory chain that catalyzes the reduction of oxygen to water. May play a role in the assembly of respiratory supercomplexes. In Mus musculus (Mouse), this protein is HIG1 domain family member 1A, mitochondrial (Higd1a).